The sequence spans 666 residues: Peptidase S41 family protein phomP1' (666 aa).

Positions 1–27 (MSSFLVQTAVVRLFLLGVVFWFPFALS) are cleaved as a signal peptide. Asn70, Asn214, and Asn234 each carry an N-linked (GlcNAc...) asparagine glycan. Positions 303–504 (DVAVLQITSF…LLQAQGVRTV (202 aa)) are peptidase S41 domain. N-linked (GlcNAc...) asparagine glycosylation is found at Asn555 and Asn612.

It belongs to the peptidase S41A family.

Its pathway is mycotoxin biosynthesis. Peptidase S41 family protein; part of the gene cluster that mediates the biosynthesis of the phomopsins, a group of hexapeptide mycotoxins which infects lupins and causes lupinosis disease in livestock. Within the pathway, phomP1 and phomP1' are probably involved in the processing of the phomA and phomA' precursors. The pathway starts with the processing of the precursor phomA by several endopeptidases including kexin proteases as well as the cluster-specific S41 family peptidase phomP1 and the oligopeptidase phomG to produce 10 identical copies of the hexapeptide Tyr-Val-Ile-Pro-Ile-Asp. After being excised from the precursor peptide, the core peptides are cyclized and modified post-translationally by enzymes encoded within the gene cluster. The timing and order of proteolysis of the phomA precursor and PTMs are still unknown. Two tyrosinase-like enzymes, phomQ1 and phomQ2, catalyze the chlorination and hydroxylation of Tyr, respectively. PhomYb, is proposed to be involved in the construction of the macrocyclic structure. The other 4 ustYa family proteins may be involved in PTMs that generate the unique structure of phomopsin A. PhomYa is required for the hydroxylation of C-beta of Tyr. PhomYc, phomYd, and phomYe are responsible for the biosynthesis of 2,3-dehydroisoleucine (dIle), 2,3-dehydroaspartic acid (dAsp), and 3,4-dehydroproline (dPro), respectively. While dIle formation by phomYc is indispensable for the installation of dAsp by phomYd, the order of the other PTMs have not been elucidated yet. Most of the biosynthetic enzymes likely have broad substrate specificity, and thus, there might be a metabolic grid from a precursor to phomopsin A. The enzyme(s) responsible for the biosynthesis of 3,4-dehydrovaline (dVal) have also not been identified yet. Finally, phomM acts as an S-adenosylmethionine-dependent alpha-N-methyltransferase that catalyzes two successive N-methylation reactions, converting N-desmethyl-phomopsin A to phomopsin A and phomopsin A further to an N,N-dimethylated congener called phomopsin E. In Diaporthe leptostromiformis (Lupinosis disease fungus), this protein is Peptidase S41 family protein phomP1'.